A 491-amino-acid chain; its full sequence is Protein DETOXIFICATION 20 (491 aa).

A run of 12 helical transmembrane segments spans residues 37 to 57 (LWVV…VSMV), 75 to 95 (ITFT…AGAL), 120 to 140 (IVLT…GPIL), 156 to 176 (LALW…CQMF), 185 to 205 (IISY…WLLV), 214 to 234 (GAMT…LLYV), 265 to 285 (GGML…TGNL), 296 to 316 (AICI…LAAV), 337 to 357 (LIAV…FLFL), 381 to 401 (LLAF…VAIG), 413 to 433 (LACY…VVGL), and 438 to 458 (VWIG…VMTL).

It belongs to the multi antimicrobial extrusion (MATE) (TC 2.A.66.1) family.

The protein resides in the membrane. The protein is Protein DETOXIFICATION 20 of Arabidopsis thaliana (Mouse-ear cress).